The primary structure comprises 359 residues: Peptide chain release factor 1 (359 aa).

Gln-235 bears the N5-methylglutamine mark. The disordered stretch occupies residues 282 to 306 (RQRADSERSADRKSQVGSGDRSERI).

This sequence belongs to the prokaryotic/mitochondrial release factor family. Post-translationally, methylated by PrmC. Methylation increases the termination efficiency of RF1.

It localises to the cytoplasm. Functionally, peptide chain release factor 1 directs the termination of translation in response to the peptide chain termination codons UAG and UAA. The protein is Peptide chain release factor 1 of Rhizobium rhizogenes (strain K84 / ATCC BAA-868) (Agrobacterium radiobacter).